Here is a 170-residue protein sequence, read N- to C-terminus: Non-specific lipid transfer protein GPI-anchored 5 (170 aa).

A signal peptide spans 1 to 24 (MKMEMGLVFLTVFMAVMSSTMVSA). 4 disulfide bridges follow: Cys28-Cys69, Cys38-Cys53, Cys54-Cys95, and Cys67-Cys105. N-linked (GlcNAc...) asparagine glycosylation is found at Asn45, Asn84, Asn124, and Asn130. Positions 105-148 (CNTGGGGGGSTSDSPAESPNSSGPGNGSKTVPVGEGDGPPSSDG) are disordered. Ser146 carries GPI-anchor amidated serine lipidation. Residues 147 to 170 (DGSSIKFSFPLIAFFSAVSYMAIF) constitute a propeptide, removed in mature form.

It belongs to the plant LTP family. As to expression, expressed in seedlings, preferentially in the endodermis of hypocotyls and roots, as well as in anthers, sepals and flower tori.

The protein localises to the cell membrane. Functionally, lipid transfer protein involved in seed and ovule maturation and development, probably by regulating the fatty acids homeostasis during suberin and sporopollenin biosynthesis or deposition. Contributes to pre-invasive defense against some non-host powdery mildew pathogens by preventing the penetration of the epidermal cell wall by the fungal agents (e.g. Blumeria graminis f. sp. hordei (Bgh)). The chain is Non-specific lipid transfer protein GPI-anchored 5 from Arabidopsis thaliana (Mouse-ear cress).